The following is a 72-amino-acid chain: Conotoxin Gla(2)-TxVI/A (72 aa).

A signal peptide spans 1–19 (MQKLIILLLVAAVLMSTQA). Positions 20 to 44 (LFQEKRPMKKIDFLSKGKTDAEKQQ) are excised as a propeptide. 3 cysteine pairs are disulfide-bonded: C48/C62, C55/C66, and C61/C70. Residue E56 is modified to 4-carboxyglutamate. P58 carries the 4-hydroxyproline modification. At S71 the chain carries Serine amide.

It belongs to the conotoxin O2 superfamily. Brominated at one of the Trp residues. In terms of tissue distribution, expressed by the venom duct.

It is found in the secreted. This is Conotoxin Gla(2)-TxVI/A from Conus textile (Cloth-of-gold cone).